The sequence spans 576 residues: Pentatricopeptide repeat-containing protein At1g79080, chloroplastic (576 aa).

Residues 1-37 constitute a chloroplast transit peptide; sequence MSTLLNSVLSMASPESSPRKAVGFVSHIPSGFLHFSS. 13 PPR repeats span residues 105 to 139, 140 to 174, 175 to 209, 210 to 244, 245 to 279, 280 to 314, 315 to 349, 352 to 386, 387 to 417, 422 to 456, 457 to 487, 493 to 527, and 528 to 562; these read NVAH…GIIP, DASA…GYPS, NTVT…GLAP, NAFT…GGEP, NLVS…GFKA, NVVS…DRAP, SVVT…NHQF, TATS…RCKP, NEGT…LSNK, THDF…GFDP, DAHT…MEES, TVDN…KRMP, and NETT…KVIG.

The protein belongs to the PPR family. P subfamily.

The protein resides in the plastid. It is found in the chloroplast. This chain is Pentatricopeptide repeat-containing protein At1g79080, chloroplastic, found in Arabidopsis thaliana (Mouse-ear cress).